The following is a 170-amino-acid chain: Cyclic pyranopterin monophosphate synthase (170 aa).

Residues 89–91 (LCH) and 125–126 (ME) contribute to the substrate site. The active site involves D140.

This sequence belongs to the MoaC family. In terms of assembly, homohexamer; trimer of dimers.

The enzyme catalyses (8S)-3',8-cyclo-7,8-dihydroguanosine 5'-triphosphate = cyclic pyranopterin phosphate + diphosphate. Its pathway is cofactor biosynthesis; molybdopterin biosynthesis. Functionally, catalyzes the conversion of (8S)-3',8-cyclo-7,8-dihydroguanosine 5'-triphosphate to cyclic pyranopterin monophosphate (cPMP). The polypeptide is Cyclic pyranopterin monophosphate synthase (Streptomyces coelicolor (strain ATCC BAA-471 / A3(2) / M145)).